The sequence spans 300 residues: Pantothenate synthetase (300 aa).

30-37 contributes to the ATP binding site; it reads MGYLHEGH. Residue His-37 is the Proton donor of the active site. A (R)-pantoate-binding site is contributed by Gln-61. Beta-alanine is bound at residue Gln-61. 147 to 150 is a binding site for ATP; sequence GMKD. A (R)-pantoate-binding site is contributed by Gln-153. Residues Val-176 and 184-187 contribute to the ATP site; that span reads KSSR.

Belongs to the pantothenate synthetase family. As to quaternary structure, homodimer.

The protein localises to the cytoplasm. The catalysed reaction is (R)-pantoate + beta-alanine + ATP = (R)-pantothenate + AMP + diphosphate + H(+). It functions in the pathway cofactor biosynthesis; (R)-pantothenate biosynthesis; (R)-pantothenate from (R)-pantoate and beta-alanine: step 1/1. Its function is as follows. Catalyzes the condensation of pantoate with beta-alanine in an ATP-dependent reaction via a pantoyl-adenylate intermediate. In Geobacillus kaustophilus (strain HTA426), this protein is Pantothenate synthetase.